The primary structure comprises 253 residues: 4-hydroxy-tetrahydrodipicolinate reductase (253 aa).

16-21 (GDTGRM) is an NAD(+) binding site. NADP(+) is bound at residue Arg44. NAD(+)-binding positions include 85 to 87 (GTT) and 111 to 114 (CANT). The active-site Proton donor/acceptor is the His144. His145 contributes to the (S)-2,3,4,5-tetrahydrodipicolinate binding site. The active-site Proton donor is the Lys148. Residue 154–155 (GT) coordinates (S)-2,3,4,5-tetrahydrodipicolinate.

It belongs to the DapB family.

The protein localises to the cytoplasm. It carries out the reaction (S)-2,3,4,5-tetrahydrodipicolinate + NAD(+) + H2O = (2S,4S)-4-hydroxy-2,3,4,5-tetrahydrodipicolinate + NADH + H(+). The enzyme catalyses (S)-2,3,4,5-tetrahydrodipicolinate + NADP(+) + H2O = (2S,4S)-4-hydroxy-2,3,4,5-tetrahydrodipicolinate + NADPH + H(+). The protein operates within amino-acid biosynthesis; L-lysine biosynthesis via DAP pathway; (S)-tetrahydrodipicolinate from L-aspartate: step 4/4. Catalyzes the conversion of 4-hydroxy-tetrahydrodipicolinate (HTPA) to tetrahydrodipicolinate. The polypeptide is 4-hydroxy-tetrahydrodipicolinate reductase (Chlamydia trachomatis serovar A (strain ATCC VR-571B / DSM 19440 / HAR-13)).